Here is a 181-residue protein sequence, read N- to C-terminus: Large ribosomal subunit protein uL6 (181 aa).

This sequence belongs to the universal ribosomal protein uL6 family. Part of the 50S ribosomal subunit.

In terms of biological role, this protein binds to the 23S rRNA, and is important in its secondary structure. It is located near the subunit interface in the base of the L7/L12 stalk, and near the tRNA binding site of the peptidyltransferase center. The chain is Large ribosomal subunit protein uL6 from Coprothermobacter proteolyticus (strain ATCC 35245 / DSM 5265 / OCM 4 / BT).